The primary structure comprises 246 residues: Probable transcriptional regulatory protein YebC (246 aa).

The disordered stretch occupies residues 1–20; the sequence is MAGHSKWANTRHRKAAQDAK.

It belongs to the TACO1 family.

It localises to the cytoplasm. The chain is Probable transcriptional regulatory protein YebC from Salmonella choleraesuis (strain SC-B67).